A 496-amino-acid chain; its full sequence is Cytochrome f, chloroplastic (496 aa).

Residues 1–149 (MASLQTPVMV…VGAAAGSANA (149 aa)) constitute a chloroplast transit peptide. Heme-binding residues include Tyr-150, Cys-170, Cys-173, and His-174. Residues 462 to 481 (VQAFLFFSFTVLATQTLLVV) form a helical membrane-spanning segment.

Belongs to the cytochrome f family. In terms of assembly, interacts with plastocyanin and Rieske iron-sulfur protein. Heme is required as a cofactor.

The protein localises to the plastid. Its subcellular location is the chloroplast thylakoid membrane. In terms of biological role, translocates protons across the thylakoid membrane and transfers electrons from photosystem II to photosystem I. It receives electrons from the Rieske iron-sulfur protein and passes them to plastocyanin. The protein is Cytochrome f, chloroplastic (petA) of Euglena gracilis.